The following is an 87-amino-acid chain: Acyl-CoA-binding protein (87 aa).

Position 2 is an N-acetylserine (Ser2). Positions 2-87 (SQAEFDKAAE…VEELKKKYGI (86 aa)) constitute an ACB domain. Lys8 bears the N6-acetyllysine; alternate mark. Lys8 bears the N6-succinyllysine; alternate mark. Lys14 is a binding site for an acyl-CoA. Lys17 carries the N6-succinyllysine modification. Residue Lys19 is modified to N6-acetyllysine. At Tyr29 the chain carries Phosphotyrosine. An acyl-CoA-binding positions include 29-33 (YSHYK), Lys51, Lys55, and Tyr74. Lys51 is subject to N6-acetyllysine. The residue at position 55 (Lys55) is an N6-acetyllysine; alternate. An N6-succinyllysine; alternate modification is found at Lys55. The residue at position 55 (Lys55) is an N6-(2-hydroxyisobutyryl)lysine; alternate. Lys55 bears the N6-malonyllysine; alternate mark. Lys77 bears the N6-acetyllysine; alternate mark. Lys77 bears the N6-succinyllysine; alternate mark.

This sequence belongs to the ACBP family. Monomer.

It localises to the endoplasmic reticulum. The protein localises to the golgi apparatus. Its function is as follows. Binds medium- and long-chain acyl-CoA esters with very high affinity and may function as an intracellular carrier of acyl-CoA esters. This is Acyl-CoA-binding protein (DBI) from Chaetophractus villosus (South American armadillo).